The following is a 243-amino-acid chain: Cell division protein FtsQ (243 aa).

Residues 1 to 19 (MKRYNAKRKTHRNLKSIKK) are Cytoplasmic-facing. The helical transmembrane segment at 20-40 (LIPTVLALLAFVSLLAGIITL) threads the bilayer. Residues 41–243 (HNPKTLPFRQ…SNGLAIQWKN (203 aa)) are Periplasmic-facing. The POTRA domain occupies 46–115 (LPFRQIKITV…NELEIQVEEQ (70 aa)).

This sequence belongs to the FtsQ/DivIB family. FtsQ subfamily. As to quaternary structure, part of a complex composed of FtsB, FtsL and FtsQ.

Its subcellular location is the cell inner membrane. Functionally, essential cell division protein. May link together the upstream cell division proteins, which are predominantly cytoplasmic, with the downstream cell division proteins, which are predominantly periplasmic. May control correct divisome assembly. The polypeptide is Cell division protein FtsQ (Coxiella burnetii (strain RSA 493 / Nine Mile phase I)).